The primary structure comprises 352 residues: Uroporphyrinogen decarboxylase (352 aa).

Residues 27–31, Asp77, Tyr154, Thr209, and His325 contribute to the substrate site; that span reads RQAGR.

It belongs to the uroporphyrinogen decarboxylase family. In terms of assembly, homodimer.

It localises to the cytoplasm. The enzyme catalyses uroporphyrinogen III + 4 H(+) = coproporphyrinogen III + 4 CO2. It participates in porphyrin-containing compound metabolism; protoporphyrin-IX biosynthesis; coproporphyrinogen-III from 5-aminolevulinate: step 4/4. Functionally, catalyzes the decarboxylation of four acetate groups of uroporphyrinogen-III to yield coproporphyrinogen-III. The chain is Uroporphyrinogen decarboxylase from Legionella pneumophila (strain Corby).